We begin with the raw amino-acid sequence, 380 residues long: Alcohol dehydrogenase 2 (380 aa).

Residues cysteine 48, threonine 50, histidine 70, cysteine 100, cysteine 103, cysteine 106, cysteine 114, and cysteine 178 each coordinate Zn(2+). An alcohol contacts are provided by threonine 50 and histidine 70. Residue threonine 50 coordinates NAD(+). Residues 203–208, aspartate 227, arginine 232, threonine 273, valine 296, 296–298, phenylalanine 323, and arginine 373 each bind NAD(+); these read GLGAVG and VGV.

This sequence belongs to the zinc-containing alcohol dehydrogenase family. Homodimer. Homotetramer. It depends on Zn(2+) as a cofactor.

Its subcellular location is the cytoplasm. The catalysed reaction is a primary alcohol + NAD(+) = an aldehyde + NADH + H(+). The enzyme catalyses a secondary alcohol + NAD(+) = a ketone + NADH + H(+). The sequence is that of Alcohol dehydrogenase 2 (ADH2) from Solanum lycopersicum (Tomato).